Consider the following 141-residue polypeptide: Large ribosomal subunit protein uL11c (141 aa).

The protein belongs to the universal ribosomal protein uL11 family. In terms of assembly, part of the ribosomal stalk of the 50S ribosomal subunit. Interacts with L10 and the large rRNA to form the base of the stalk. L10 forms an elongated spine to which L12 dimers bind in a sequential fashion forming a multimeric L10(L12)X complex.

It is found in the plastid. The protein resides in the chloroplast. Forms part of the ribosomal stalk which helps the ribosome interact with GTP-bound translation factors. This chain is Large ribosomal subunit protein uL11c, found in Trieres chinensis (Marine centric diatom).